The following is a 189-amino-acid chain: Chitin synthase 1 (189 aa).

It belongs to the chitin synthase family.

Its subcellular location is the cell membrane. The catalysed reaction is [(1-&gt;4)-N-acetyl-beta-D-glucosaminyl](n) + UDP-N-acetyl-alpha-D-glucosamine = [(1-&gt;4)-N-acetyl-beta-D-glucosaminyl](n+1) + UDP + H(+). Its function is as follows. Polymerizes chitin, a structural polymer of the cell wall and septum, by transferring the sugar moiety of UDP-GlcNAc to the non-reducing end of the growing chitin polymer. The sequence is that of Chitin synthase 1 (CHS1) from Xylohypha bantiana.